Here is a 264-residue protein sequence, read N- to C-terminus: S-adenosylmethionine decarboxylase proenzyme (264 aa).

Serine 112 acts as the Schiff-base intermediate with substrate; via pyruvic acid in catalysis. Serine 112 bears the Pyruvic acid (Ser); by autocatalysis mark. Residue histidine 117 is the Proton acceptor; for processing activity of the active site. Cysteine 140 acts as the Proton donor; for catalytic activity in catalysis.

The protein belongs to the prokaryotic AdoMetDC family. Type 2 subfamily. As to quaternary structure, heterooctamer of four alpha and four beta chains arranged as a tetramer of alpha/beta heterodimers. The cofactor is pyruvate. Post-translationally, is synthesized initially as an inactive proenzyme. Formation of the active enzyme involves a self-maturation process in which the active site pyruvoyl group is generated from an internal serine residue via an autocatalytic post-translational modification. Two non-identical subunits are generated from the proenzyme in this reaction, and the pyruvate is formed at the N-terminus of the alpha chain, which is derived from the carboxyl end of the proenzyme. The post-translation cleavage follows an unusual pathway, termed non-hydrolytic serinolysis, in which the side chain hydroxyl group of the serine supplies its oxygen atom to form the C-terminus of the beta chain, while the remainder of the serine residue undergoes an oxidative deamination to produce ammonia and the pyruvoyl group blocking the N-terminus of the alpha chain.

The enzyme catalyses S-adenosyl-L-methionine + H(+) = S-adenosyl 3-(methylsulfanyl)propylamine + CO2. The protein operates within amine and polyamine biosynthesis; S-adenosylmethioninamine biosynthesis; S-adenosylmethioninamine from S-adenosyl-L-methionine: step 1/1. Catalyzes the decarboxylation of S-adenosylmethionine to S-adenosylmethioninamine (dcAdoMet), the propylamine donor required for the synthesis of the polyamines spermine and spermidine from the diamine putrescine. The protein is S-adenosylmethionine decarboxylase proenzyme of Yersinia pseudotuberculosis serotype I (strain IP32953).